An 88-amino-acid chain; its full sequence is Small ribosomal subunit protein uS15 (88 aa).

Positions 1–20 are enriched in polar residues; the sequence is MLTTQDKQNIIKENQQSEGD. The interval 1-24 is disordered; it reads MLTTQDKQNIIKENQQSEGDTGSP.

It belongs to the universal ribosomal protein uS15 family. As to quaternary structure, part of the 30S ribosomal subunit. Forms a bridge to the 50S subunit in the 70S ribosome, contacting the 23S rRNA.

One of the primary rRNA binding proteins, it binds directly to 16S rRNA where it helps nucleate assembly of the platform of the 30S subunit by binding and bridging several RNA helices of the 16S rRNA. Its function is as follows. Forms an intersubunit bridge (bridge B4) with the 23S rRNA of the 50S subunit in the ribosome. This is Small ribosomal subunit protein uS15 from Francisella philomiragia subsp. philomiragia (strain ATCC 25017 / CCUG 19701 / FSC 153 / O#319-036).